The following is a 254-amino-acid chain: 5'-nucleotidase SurE (254 aa).

A divalent metal cation-binding residues include Asp8, Asp9, Ser39, and Asn91.

The protein belongs to the SurE nucleotidase family. Requires a divalent metal cation as cofactor.

Its subcellular location is the cytoplasm. It carries out the reaction a ribonucleoside 5'-phosphate + H2O = a ribonucleoside + phosphate. Nucleotidase that shows phosphatase activity on nucleoside 5'-monophosphates. In Pseudoalteromonas translucida (strain TAC 125), this protein is 5'-nucleotidase SurE.